The chain runs to 1432 residues: Probable ATP-dependent RNA helicase spindle-E (1432 aa).

Positions 124 to 291 (LAAINAHPVV…FTTTNSVPPV (168 aa)) constitute a Helicase ATP-binding domain. Residue 137 to 144 (GQTGCGKT) participates in ATP binding. The DEAH box motif lies at 237 to 240 (DEVH). In terms of domain architecture, Helicase C-terminal spans 337-524 (KIIMVIDNME…NSVLRAKELE (188 aa)). Positions 936 to 999 (AGAITKGMMV…RLMPKELIQQ (64 aa)) constitute a Tudor domain.

This sequence belongs to the DEAD box helicase family. DEAH subfamily.

It localises to the cytoplasm. The enzyme catalyses ATP + H2O = ADP + phosphate + H(+). Its function is as follows. Probable ATP-binding RNA helicase which plays a central role during spermatogenesis and oogenesis by repressing transposable elements and preventing their mobilization, which is essential for the germline integrity. Acts via the piRNA metabolic process, which mediates the repression of transposable elements during meiosis by forming complexes composed of piRNAs and Piwi and govern the methylation and subsequent repression of transposons. Involved in the repression of LTR retrotransposon copia. Also involved in telomere regulation by repressing specialized telomeric retroelements HeT-A, TAHRE, and TART; Drosophila telomeres being maintained by transposition of specialized telomeric retroelements. Involved in telomeric trans-silencing, a repression mechanism by which a transposon or a transgene inserted in subtelomeric heterochromatin has the capacity to repress in trans in the female germline, a homologous transposon, or transgene located in euchromatin. Involved in the repression of testis-expressed Stellate genes by the homologous Su(Ste) repeats. Required for anteroposterior and dorsoventral axis formation during oogenesis. The protein is Probable ATP-dependent RNA helicase spindle-E (spn-E) of Drosophila erecta (Fruit fly).